Reading from the N-terminus, the 355-residue chain is CX3C chemokine receptor 1 (355 aa).

At 1 to 31 (MDQFPESVTENFEYDDLAEACYIGDIVVFGT) the chain is on the extracellular side. A helical membrane pass occupies residues 32–59 (VFLSIFYSVIFAIGLVGNLLVVFALTNS). Over 60–69 (KKPKSVTDIY) the chain is Cytoplasmic. Residues 70-90 (LLNLALSDLLFVATLPFWTHY) form a helical membrane-spanning segment. Over 91 to 103 (LINEKGLHNAMCK) the chain is Extracellular. A disulfide bond links Cys102 and Cys175. A helical transmembrane segment spans residues 104–125 (FTTAFFFIGFFGSIFFITVISI). Residues 126-142 (DRYLAIVLAANSMNNRT) lie on the Cytoplasmic side of the membrane. The helical transmembrane segment at 143-167 (VQHGVTISLGVWAAAILVAAPQFMF) threads the bilayer. Residues 168 to 195 (TKQKENECLGDYPEVLQEIWPVLRNVET) lie on the Extracellular side of the membrane. The helical transmembrane segment at 196–215 (NFLGFLLPLLIMSYCYFRII) threads the bilayer. Over 216–231 (QTLFSCKNHKKAKAIK) the chain is Cytoplasmic. The helical transmembrane segment at 232 to 256 (LILLVVIVFFLFWTPYNVMIFLETL) threads the bilayer. Over 257–273 (KLYDFFPSCDMRKDLRL) the chain is Extracellular. A helical transmembrane segment spans residues 274 to 297 (ALSVTETVAFSHCCLNPLIYAFAG). The Cytoplasmic segment spans residues 298–355 (EKFRRYLYHLYGKCLAVLCGRSVHVDFSSSESQRSRHGSVLSSNFTYHTSDGDALLLL). Phosphothreonine is present on Thr346.

Belongs to the G-protein coupled receptor 1 family. Found in a ternary complex with CX3CL1 and ITGAV:ITGB3 or ITGA4:ITGB1. As to quaternary structure, (Microbial infection) Interacts with human respiratory syncytial virus (HRSV) protein G; this interaction modulates host immune response. In terms of assembly, (Microbial infection) Interacts with HIV-1 envelope polyprotein gp160. This protein is not N-glycosylated which is unusual for G-protein-coupled receptors. Expressed in lymphoid and neural tissues. Expressed in lymphocyte subsets, such as natural killer (NK) cells, gamma-delta T-cells and terminally differentiated CD8(+) T-cells. Expressed in smooth muscle cells in atherosclerotic plaques.

The protein localises to the cell membrane. Receptor for the C-X3-C chemokine fractalkine (CX3CL1) present on many early leukocyte cells; CX3CR1-CX3CL1 signaling exerts distinct functions in different tissue compartments, such as immune response, inflammation, cell adhesion and chemotaxis. CX3CR1-CX3CL1 signaling mediates cell migratory functions. Responsible for the recruitment of natural killer (NK) cells to inflamed tissues. Acts as a regulator of inflammation process leading to atherogenesis by mediating macrophage and monocyte recruitment to inflamed atherosclerotic plaques, promoting cell survival. Involved in airway inflammation by promoting interleukin 2-producing T helper (Th2) cell survival in inflamed lung. Involved in the migration of circulating monocytes to non-inflamed tissues, where they differentiate into macrophages and dendritic cells. Acts as a negative regulator of angiogenesis, probably by promoting macrophage chemotaxis. Plays a key role in brain microglia by regulating inflammatory response in the central nervous system (CNS) and regulating synapse maturation. Required to restrain the microglial inflammatory response in the CNS and the resulting parenchymal damage in response to pathological stimuli. Involved in brain development by participating in synaptic pruning, a natural process during which brain microglia eliminates extra synapses during postnatal development. Synaptic pruning by microglia is required to promote the maturation of circuit connectivity during brain development. Acts as an important regulator of the gut microbiota by controlling immunity to intestinal bacteria and fungi. Expressed in lamina propria dendritic cells in the small intestine, which form transepithelial dendrites capable of taking up bacteria in order to provide defense against pathogenic bacteria. Required to initiate innate and adaptive immune responses against dissemination of commensal fungi (mycobiota) component of the gut: expressed in mononuclear phagocytes (MNPs) and acts by promoting induction of antifungal IgG antibodies response to confer protection against disseminated C.albicans or C.auris infection. Also acts as a receptor for C-C motif chemokine CCL26, inducing cell chemotaxis. Functionally, (Microbial infection) Acts as a coreceptor with CD4 for HIV-1 virus envelope protein. Its function is as follows. (Microbial infection) Acts as a coreceptor with CD4 for HIV-1 virus envelope protein. May have more potent HIV-1 coreceptothr activity than isoform 1. In terms of biological role, (Microbial infection) Acts as a coreceptor with CD4 for HIV-1 virus envelope protein. May have more potent HIV-1 coreceptor activity than isoform 1. The polypeptide is CX3C chemokine receptor 1 (Homo sapiens (Human)).